We begin with the raw amino-acid sequence, 235 residues long: Small capsomere-interacting protein (235 aa).

Residues 104-235 are disordered; that stretch reads PRIIRPQPPN…SGNASRSRRV (132 aa). Residues 127-139 show a composition bias toward polar residues; the sequence is PQKTQSADQSALQ. Over residues 158-188 the composition is skewed to low complexity; the sequence is TTSASVGQQQHVVSGSSGQQPQQGAQSSTVQ. Positions 220 to 235 are enriched in polar residues; it reads LSHTGQSGNASRSRRV.

This sequence belongs to the herpesviridae small capsomere-interacting protein family. In terms of assembly, interacts with the major capsid protein/MCP.

The protein localises to the virion. The protein resides in the host nucleus. In terms of biological role, participates in the assembly of the infectious particles by decorating the outer surface of the capsid shell and thus forming a layer between the capsid and the tegument. Complexes composed of the capsid protein VP5 and VP26 assemble together in the host cytoplasm and are translocated to the nucleus, where they accumulate and participate in capsid assembly. Its function is as follows. Participates in the assembly of the infectious particles by decorating the outer surface of the capsid shell and thus forming a layer between the capsid and the tegument. Complexes composed of the major capsid protein and small capsomere-interacting protein/SCP assemble together in the host cytoplasm and are translocated to the nucleus, where they accumulate and participate in capsid assembly. The sequence is that of Small capsomere-interacting protein from Homo sapiens (Human).